We begin with the raw amino-acid sequence, 446 residues long: NAD kinase (446 aa).

Phosphoserine is present on residues Ser46, Ser48, Ser50, Ser55, and Ser64.

Belongs to the NAD kinase family. The cofactor is a divalent metal cation. Widely expressed but not detected in skeletal muscle.

It carries out the reaction NAD(+) + ATP = ADP + NADP(+) + H(+). The polypeptide is NAD kinase (NADK) (Homo sapiens (Human)).